Consider the following 297-residue polypeptide: uncharacterized protein (297 aa).

A helical transmembrane segment spans residues 191–211 (VMIILSCSNITILAVLSIVGL). Polar residues predominate over residues 275 to 287 (SKTSETQSVSGST). Positions 275-297 (SKTSETQSVSGSTHSDEKLTAPM) are disordered. Over residues 288-297 (HSDEKLTAPM) the composition is skewed to basic and acidic residues.

It localises to the host membrane. This is an uncharacterized protein from Cryphonectria parasitica mycoreovirus 1 (strain 9B21) (CpMYRV-1).